Here is a 1024-residue protein sequence, read N- to C-terminus: MDIKKILVIGSGAIKVAEAAEFDYSGSQALKAFREEGIKTVLVNPNIATIQTSKFLADRVYFIPIQRQFLAEVIEQERPDAIACGFGGQTALSACVDLDEAGVLEKYGVRVVGTPVRGIKRALSRDLFQKAMREAGIPVPPSSPAKSPEEAIEIARYLGYPVVVRVSFNLGGAGAFVARSEEALKARIYKAFAQSAIGEVLVEKYLEGWKEIEFEVVRDAYDNVAAVVCMENIDPMGVHTGDSIVVAPCLTLTDEEYQTARNISIGVVRTIELIGEGNVQVAINYAGPEQYAIETNPRMSRSSALASKASGYPLAYIAAKLALGYRLDEVLNQVTRRTVASFEPALDYIVVKHPRWESDRFGVTEGLGPEMMSIGEAMGIGRTLEEAWQKAVRMIDIGEPGLVGGPMFQSLTLEEALKCIKDYVPYWPICAAKAIYLGVSVEEIYKINKVDKFFLNAIKRIVDVYKRLEAGEVDLDEAKVLGFSDWQIAKALGKSVDEIRAMRRRPVVKKIDTLAGEWPADTNYLYLTYGGQYDDKTPGVDYLVVGAGVFRIGVSVEFDWSTVTLATELKNRGYRVAILNYNPETVSTDWDIVDKLYFDEISVERVLDIVEKEGNGVTVVLYAGGQIGQRLYVPLEKVGVKIGGTRAKSIDMAEDRGKFSKLLDRLGIKQPPWLYAASVEEAVKLAEGLGFPVLLRPSYVLGGTYMAVAYNKEELINFLSKAAKVSGEYPVVISKFMPRGIEAEVDAVSDGVKIVATPIEHIEPPGVHSGDSTMVLPPRRLEEWAVKKMIDIAHTLAVELEVKGPLNVQFIVQDDVYVIEANLRVSRSMPLVSKATGVNYMSLVADVLTHGRLAVDEERITLKPSKWWVKSPQFSWARLRGAYPRLGPVMYSTGEVASNGSVFEEALLKSWLSATPNKIPSKTALIYTYDPHHEELLRQAAGLLSWRLEIYTPEQLGGKIAEMLKWRKIDIVMTAGITPEKDFHVRRTAADTNTPLVLDSTLAVELAKAFNWYYKNGKLEVAPW.

The carboxyphosphate synthetic domain stretch occupies residues 1–396 (MDIKKILVIG…AWQKAVRMID (396 aa)). Residues arginine 125, arginine 165, glycine 171, glycine 172, lysine 204, leucine 206, glutamate 211, glycine 237, valine 238, histidine 239, glutamine 280, and glutamate 294 each coordinate ATP. The region spanning 129 to 323 (QKAMREAGIP…LAYIAAKLAL (195 aa)) is the ATP-grasp 1 domain. Mg(2+)-binding residues include glutamine 280, glutamate 294, and asparagine 296. Residues glutamine 280, glutamate 294, and asparagine 296 each coordinate Mn(2+). The interval 397-536 (IGEPGLVGGP…LTYGGQYDDK (140 aa)) is oligomerization domain. The carbamoyl phosphate synthetic domain stretch occupies residues 536-917 (KTPGVDYLVV…LKSWLSATPN (382 aa)). Positions 660–849 (SKLLDRLGIK…YMSLVADVLT (190 aa)) constitute an ATP-grasp 2 domain. The ATP site is built by arginine 696, lysine 735, glutamate 742, glycine 766, valine 767, histidine 768, serine 769, glutamine 809, and glutamate 820. Mg(2+)-binding residues include glutamine 809, glutamate 820, and asparagine 822. Positions 809, 820, and 822 each coordinate Mn(2+). Residues 917 to 1024 (NKIPSKTALI…KNGKLEVAPW (108 aa)) form the MGS-like domain. The interval 918 to 1024 (KIPSKTALIY…KNGKLEVAPW (107 aa)) is allosteric domain.

This sequence belongs to the CarB family. Composed of two chains; the small (or glutamine) chain promotes the hydrolysis of glutamine to ammonia, which is used by the large (or ammonia) chain to synthesize carbamoyl phosphate. Tetramer of heterodimers (alpha,beta)4. Mg(2+) is required as a cofactor. Mn(2+) serves as cofactor.

The catalysed reaction is hydrogencarbonate + L-glutamine + 2 ATP + H2O = carbamoyl phosphate + L-glutamate + 2 ADP + phosphate + 2 H(+). The enzyme catalyses hydrogencarbonate + NH4(+) + 2 ATP = carbamoyl phosphate + 2 ADP + phosphate + 2 H(+). It functions in the pathway amino-acid biosynthesis; L-arginine biosynthesis; carbamoyl phosphate from bicarbonate: step 1/1. The protein operates within pyrimidine metabolism; UMP biosynthesis via de novo pathway; (S)-dihydroorotate from bicarbonate: step 1/3. Its function is as follows. Large subunit of the glutamine-dependent carbamoyl phosphate synthetase (CPSase). CPSase catalyzes the formation of carbamoyl phosphate from the ammonia moiety of glutamine, carbonate, and phosphate donated by ATP, constituting the first step of 2 biosynthetic pathways, one leading to arginine and/or urea and the other to pyrimidine nucleotides. The large subunit (synthetase) binds the substrates ammonia (free or transferred from glutamine from the small subunit), hydrogencarbonate and ATP and carries out an ATP-coupled ligase reaction, activating hydrogencarbonate by forming carboxy phosphate which reacts with ammonia to form carbamoyl phosphate. The chain is Carbamoyl phosphate synthase large chain from Pyrobaculum aerophilum (strain ATCC 51768 / DSM 7523 / JCM 9630 / CIP 104966 / NBRC 100827 / IM2).